We begin with the raw amino-acid sequence, 146 residues long: Transcriptional regulator MraZ (146 aa).

2 SpoVT-AbrB domains span residues 4-46 (TVFR…SQTE) and 75-118 (TVKV…PEQR).

The protein belongs to the MraZ family. In terms of assembly, forms oligomers.

Its subcellular location is the cytoplasm. The protein resides in the nucleoid. In Mesomycoplasma hyopneumoniae (strain 232) (Mycoplasma hyopneumoniae), this protein is Transcriptional regulator MraZ.